A 357-amino-acid polypeptide reads, in one-letter code: DNA replication and repair protein RecF (357 aa).

30-37 serves as a coordination point for ATP; the sequence is GANGSGKT.

Belongs to the RecF family.

The protein localises to the cytoplasm. Functionally, the RecF protein is involved in DNA metabolism; it is required for DNA replication and normal SOS inducibility. RecF binds preferentially to single-stranded, linear DNA. It also seems to bind ATP. This Enterobacter sp. (strain 638) protein is DNA replication and repair protein RecF.